A 332-amino-acid chain; its full sequence is 2,3-diketo-L-gulonate reductase (332 aa).

The active-site Proton donor is the H44. Residues 168 to 174 (ITMIDMS), 224 to 225 (WK), and 304 to 306 (GHE) each bind NAD(+).

It belongs to the LDH2/MDH2 oxidoreductase family. DlgD subfamily. In terms of assembly, homodimer.

The protein localises to the cytoplasm. The enzyme catalyses 3-dehydro-L-gulonate + NAD(+) = 2,3-dioxo-L-gulonate + NADH + H(+). The catalysed reaction is 3-dehydro-L-gulonate + NADP(+) = 2,3-dioxo-L-gulonate + NADPH + H(+). Functionally, catalyzes the reduction of 2,3-diketo-L-gulonate in the presence of NADH, to form 3-keto-L-gulonate. The polypeptide is 2,3-diketo-L-gulonate reductase (Citrobacter koseri (strain ATCC BAA-895 / CDC 4225-83 / SGSC4696)).